Here is a 397-residue protein sequence, read N- to C-terminus: Enoyl-[acyl-carrier-protein] reductase [NADH] (397 aa).

NAD(+) is bound by residues 47 to 52 (GASTGY), 73 to 74 (LE), 110 to 111 (DA), and 138 to 139 (LA). Tyrosine 224 lines the substrate pocket. The active-site Proton donor is tyrosine 234. NAD(+) is bound by residues lysine 243 and 272 to 274 (LVT).

The protein belongs to the TER reductase family. In terms of assembly, monomer.

The catalysed reaction is a 2,3-saturated acyl-[ACP] + NAD(+) = a (2E)-enoyl-[ACP] + NADH + H(+). It functions in the pathway lipid metabolism; fatty acid biosynthesis. Involved in the final reduction of the elongation cycle of fatty acid synthesis (FAS II). Catalyzes the reduction of a carbon-carbon double bond in an enoyl moiety that is covalently linked to an acyl carrier protein (ACP). This chain is Enoyl-[acyl-carrier-protein] reductase [NADH], found in Methylobacillus flagellatus (strain ATCC 51484 / DSM 6875 / VKM B-1610 / KT).